A 445-amino-acid polypeptide reads, in one-letter code: tRNA-2-methylthio-N(6)-dimethylallyladenosine synthase (445 aa).

The 116-residue stretch at 2–117 folds into the MTTase N-terminal domain; sequence QGLYIKSYGC…LPELIVKARK (116 aa). [4Fe-4S] cluster-binding residues include Cys11, Cys47, Cys80, Cys157, Cys161, and Cys164. The Radical SAM core domain maps to 143–374; that stretch reads KNQKVSAFIS…QELVHKQQLE (232 aa). The TRAM domain occupies 377–441; that stretch reads KKMIGETHPV…KNHLTGIIPH (65 aa).

This sequence belongs to the methylthiotransferase family. MiaB subfamily. Monomer. [4Fe-4S] cluster is required as a cofactor.

It localises to the cytoplasm. It catalyses the reaction N(6)-dimethylallyladenosine(37) in tRNA + (sulfur carrier)-SH + AH2 + 2 S-adenosyl-L-methionine = 2-methylsulfanyl-N(6)-dimethylallyladenosine(37) in tRNA + (sulfur carrier)-H + 5'-deoxyadenosine + L-methionine + A + S-adenosyl-L-homocysteine + 2 H(+). Functionally, catalyzes the methylthiolation of N6-(dimethylallyl)adenosine (i(6)A), leading to the formation of 2-methylthio-N6-(dimethylallyl)adenosine (ms(2)i(6)A) at position 37 in tRNAs that read codons beginning with uridine. The protein is tRNA-2-methylthio-N(6)-dimethylallyladenosine synthase of Ehrlichia ruminantium (strain Gardel).